Here is a 569-residue protein sequence, read N- to C-terminus: Proline--tRNA ligase (569 aa).

It belongs to the class-II aminoacyl-tRNA synthetase family. ProS type 1 subfamily. In terms of assembly, homodimer.

The protein localises to the cytoplasm. It catalyses the reaction tRNA(Pro) + L-proline + ATP = L-prolyl-tRNA(Pro) + AMP + diphosphate. Its function is as follows. Catalyzes the attachment of proline to tRNA(Pro) in a two-step reaction: proline is first activated by ATP to form Pro-AMP and then transferred to the acceptor end of tRNA(Pro). As ProRS can inadvertently accommodate and process non-cognate amino acids such as alanine and cysteine, to avoid such errors it has two additional distinct editing activities against alanine. One activity is designated as 'pretransfer' editing and involves the tRNA(Pro)-independent hydrolysis of activated Ala-AMP. The other activity is designated 'posttransfer' editing and involves deacylation of mischarged Ala-tRNA(Pro). The misacylated Cys-tRNA(Pro) is not edited by ProRS. The chain is Proline--tRNA ligase from Campylobacter jejuni (strain RM1221).